The following is a 156-amino-acid chain: Low molecular weight phosphotyrosine protein phosphatase (156 aa).

Cys11 functions as the Nucleophile in the catalytic mechanism. The active site involves Arg17. The active-site Proton donor is the Asp128.

The protein belongs to the low molecular weight phosphotyrosine protein phosphatase family.

Its subcellular location is the cytoplasm. The catalysed reaction is O-phospho-L-tyrosyl-[protein] + H2O = L-tyrosyl-[protein] + phosphate. It catalyses the reaction a phosphate monoester + H2O = an alcohol + phosphate. Functionally, may contribute to dephosphorylation of 'Tyr-15' of cdc2. This Schizosaccharomyces pombe (strain 972 / ATCC 24843) (Fission yeast) protein is Low molecular weight phosphotyrosine protein phosphatase (stp1).